We begin with the raw amino-acid sequence, 151 residues long: Ubiquitin-conjugating enzyme E2-17 kDa (151 aa).

The 147-residue stretch at 4-150 (PARRRLMRDF…VKACVEQSFI (147 aa)) folds into the UBC core domain. The active-site Glycyl thioester intermediate is cysteine 88.

It belongs to the ubiquitin-conjugating enzyme family.

The protein resides in the nucleus. The catalysed reaction is S-ubiquitinyl-[E1 ubiquitin-activating enzyme]-L-cysteine + [E2 ubiquitin-conjugating enzyme]-L-cysteine = [E1 ubiquitin-activating enzyme]-L-cysteine + S-ubiquitinyl-[E2 ubiquitin-conjugating enzyme]-L-cysteine.. It functions in the pathway protein modification; protein ubiquitination. In terms of biological role, E2 ubiquitin-conjugating enzyme that accepts ubiquitin from the ubiquitin-activating enzyme E1 and transfers it to a E3 ubiquitin-protein ligase. Required for postreplication repair of UV-damaged DNA. Involved in the negative regulation of the Ras/MAPK signaling pathway in the wing by acting with the putative E3 ligases poe, Kcmf1 and Ufd4 to mediate the ubiquitination and proteasomal degradation of rl/MAPK. Required for in mitophagy. This Drosophila melanogaster (Fruit fly) protein is Ubiquitin-conjugating enzyme E2-17 kDa.